Here is a 313-residue protein sequence, read N- to C-terminus: Porphobilinogen deaminase (313 aa).

An S-(dipyrrolylmethanemethyl)cysteine modification is found at cysteine 242.

This sequence belongs to the HMBS family. As to quaternary structure, monomer. The cofactor is dipyrromethane.

It catalyses the reaction 4 porphobilinogen + H2O = hydroxymethylbilane + 4 NH4(+). It functions in the pathway porphyrin-containing compound metabolism; protoporphyrin-IX biosynthesis; coproporphyrinogen-III from 5-aminolevulinate: step 2/4. Its function is as follows. Tetrapolymerization of the monopyrrole PBG into the hydroxymethylbilane pre-uroporphyrinogen in several discrete steps. This Pseudomonas aeruginosa (strain LESB58) protein is Porphobilinogen deaminase.